We begin with the raw amino-acid sequence, 120 residues long: Fumarate reductase subunit D (120 aa).

The next 3 helical transmembrane spans lie at 25–45, 55–75, and 100–120; these read FAML…LGVI, VAGF…ISMP, and IACY…IFMI.

This sequence belongs to the FrdD family. In terms of assembly, part of an enzyme complex containing four subunits: a flavoprotein (FrdA), an iron-sulfur protein (FrdB), and two hydrophobic anchor proteins (FrdC and FrdD).

Its subcellular location is the cell inner membrane. Its function is as follows. Anchors the catalytic components of the fumarate reductase complex to the cell membrane, binds quinones. The chain is Fumarate reductase subunit D from Aliivibrio salmonicida (strain LFI1238) (Vibrio salmonicida (strain LFI1238)).